We begin with the raw amino-acid sequence, 254 residues long: Peptide methionine sulfoxide reductase A5 (254 aa).

A signal peptide spans 1–33 (MAISLKRNRFFIPYTNLVFFFFLCVSLLDKTVS).

This sequence belongs to the MsrA Met sulfoxide reductase family.

It catalyses the reaction L-methionyl-[protein] + [thioredoxin]-disulfide + H2O = L-methionyl-(S)-S-oxide-[protein] + [thioredoxin]-dithiol. The catalysed reaction is [thioredoxin]-disulfide + L-methionine + H2O = L-methionine (S)-S-oxide + [thioredoxin]-dithiol. Functionally, catalyzes the reduction of methionine sulfoxide (MetSO) to methionine in proteins. Plays a protective role against oxidative stress by restoring activity to proteins that have been inactivated by methionine oxidation. MSRA family specifically reduces the MetSO S-enantiomer. This chain is Peptide methionine sulfoxide reductase A5 (MSRA5), found in Arabidopsis thaliana (Mouse-ear cress).